Here is a 98-residue protein sequence, read N- to C-terminus: Large ribosomal subunit protein uL23 (98 aa).

This sequence belongs to the universal ribosomal protein uL23 family. In terms of assembly, part of the 50S ribosomal subunit. Contacts protein L29, and trigger factor when it is bound to the ribosome.

Functionally, one of the early assembly proteins it binds 23S rRNA. One of the proteins that surrounds the polypeptide exit tunnel on the outside of the ribosome. Forms the main docking site for trigger factor binding to the ribosome. This Marinomonas sp. (strain MWYL1) protein is Large ribosomal subunit protein uL23.